Reading from the N-terminus, the 164-residue chain is Ribosomal RNA large subunit methyltransferase H (164 aa).

Gly109 lines the S-adenosyl-L-methionine pocket.

It belongs to the RNA methyltransferase RlmH family. In terms of assembly, homodimer.

It is found in the cytoplasm. The catalysed reaction is pseudouridine(1915) in 23S rRNA + S-adenosyl-L-methionine = N(3)-methylpseudouridine(1915) in 23S rRNA + S-adenosyl-L-homocysteine + H(+). Functionally, specifically methylates the pseudouridine at position 1915 (m3Psi1915) in 23S rRNA. In Methylobacterium radiotolerans (strain ATCC 27329 / DSM 1819 / JCM 2831 / NBRC 15690 / NCIMB 10815 / 0-1), this protein is Ribosomal RNA large subunit methyltransferase H.